Here is a 146-residue protein sequence, read N- to C-terminus: Protein STIG1 (146 aa).

The signal sequence occupies residues 1–23 (MAFINLLILIILTLSSTPITTMS). 3 N-linked (GlcNAc...) asparagine glycosylation sites follow: Asn31, Asn61, and Asn84.

The protein belongs to the STIG1 family. Glycosylated. In terms of tissue distribution, expressed exclusively in the stigmatic secretory zone.

The protein localises to the secreted. Involved in the temporal regulation of the exudate secretion onto the stigma. The sequence is that of Protein STIG1 from Nicotiana tabacum (Common tobacco).